The following is a 455-amino-acid chain: Membrane-bound lytic murein transglycosylase F (455 aa).

Positions 1-21 (MPKSAVSLFAILLLAASVITA) are cleaved as a signal peptide. A non-LT domain region spans residues 22–264 (CSPQTRPDAM…HIKEQHFGHV (243 aa)). The tract at residues 265–455 (KQFNYVTTSL…LKYLDEQGRL (191 aa)) is LT domain. The active site involves glutamate 309.

This sequence in the N-terminal section; belongs to the bacterial solute-binding protein 3 family. In the C-terminal section; belongs to the transglycosylase Slt family.

It is found in the cell outer membrane. It carries out the reaction Exolytic cleavage of the (1-&gt;4)-beta-glycosidic linkage between N-acetylmuramic acid (MurNAc) and N-acetylglucosamine (GlcNAc) residues in peptidoglycan, from either the reducing or the non-reducing ends of the peptidoglycan chains, with concomitant formation of a 1,6-anhydrobond in the MurNAc residue.. Murein-degrading enzyme that degrades murein glycan strands and insoluble, high-molecular weight murein sacculi, with the concomitant formation of a 1,6-anhydromuramoyl product. Lytic transglycosylases (LTs) play an integral role in the metabolism of the peptidoglycan (PG) sacculus. Their lytic action creates space within the PG sacculus to allow for its expansion as well as for the insertion of various structures such as secretion systems and flagella. This is Membrane-bound lytic murein transglycosylase F from Idiomarina loihiensis (strain ATCC BAA-735 / DSM 15497 / L2-TR).